A 137-amino-acid chain; its full sequence is Ribosome-binding factor A (137 aa).

It belongs to the RbfA family. Monomer. Binds 30S ribosomal subunits, but not 50S ribosomal subunits or 70S ribosomes.

Its subcellular location is the cytoplasm. One of several proteins that assist in the late maturation steps of the functional core of the 30S ribosomal subunit. Associates with free 30S ribosomal subunits (but not with 30S subunits that are part of 70S ribosomes or polysomes). Required for efficient processing of 16S rRNA. May interact with the 5'-terminal helix region of 16S rRNA. In Nitrobacter winogradskyi (strain ATCC 25391 / DSM 10237 / CIP 104748 / NCIMB 11846 / Nb-255), this protein is Ribosome-binding factor A.